Consider the following 69-residue polypeptide: ATP synthase subunits region ORF 1 (69 aa).

The polypeptide is ATP synthase subunits region ORF 1 (Fuscovulum blasticum (Rhodobacter blasticus)).